Consider the following 760-residue polypeptide: MKTPWKVLLGLLGVAALVTIITVPIVLLSKDEAAADSRRTYSLADYLKSTFRVKSYSLWWVSDFEYLYKQENNILLLNAEHGNSSIFLENSTFESFGYHSVSPDRLFVLLEYNYVKQWRHSYTASYNIYDVNKRQLITEEKIPNNTQWITWSPEGHKLAYVWKNDIYVKVEPHLPSHRITSTGEENVIYNGITDWVYEEEVFGAYSALWWSPNNTFLAYAQFNDTGVPLIEYSFYSDESLQYPKTVWIPYPKAGAVNPTVKFFIVNIDSLSSSSSAAPIQIPAPASVARGDHYLCDVVWATEERISLQWLRRIQNYSVMAICDYDKINLTWNCPSEQQHVEMSTTGWVGRFRPAEPHFTSDGSSFYKIISDKDGYKHICHFPKDKKDCTFITKGAWEVISIEALTSDYLYYISNQYKEMPGGRNLYKIQLTDHTNVKCLSCDLNPERCQYYAVSFSKEAKYYQLGCWGPGLPLYTLHRSTDHKELRVLEDNSALDRMLQDVQMPSKKLDFIVLNETRFWYQMILPPHFDKSKKYPLLLDVYAGPCSQKADASFRLNWATYLASTENIIVASFDGRGSGYQGDKIMHAINRRLGTLEVEDQIEAARQFVKMGFVDSKRVAIWGWSYGGYVTSMVLGSGSGVFKCGIAVAPVSRWEYYDSVYTERYMGLPIPEDNLDHYRNSTVMSRAEHFKQVEYLLIHGTADDNVHFQQSAQISKALVDAGVDFQAMWYTDEDHGIASSTAHQHIYSHMSHFLQQCFSLH.

Residues 1–6 (MKTPWK) are Cytoplasmic-facing. Residues 7–28 (VLLGLLGVAALVTIITVPIVLL) traverse the membrane as a helical; Signal-anchor for type II membrane protein segment. The Extracellular segment spans residues 29 to 760 (SKDEAAADSR…HFLQQCFSLH (732 aa)). Residues Asn-83, Asn-90, Asn-144, Asn-213, Asn-223, Asn-315, and Asn-328 are each glycosylated (N-linked (GlcNAc...) asparagine). Disulfide bonds link Cys-322-Cys-333, Cys-379-Cys-388, Cys-438-Cys-441, and Cys-448-Cys-466. The N-linked (GlcNAc...) asparagine glycan is linked to Asn-514. Ser-624 acts as the Charge relay system in catalysis. Cys-643 and Cys-756 form a disulfide bridge. Asn-679 is a glycosylation site (N-linked (GlcNAc...) asparagine). Catalysis depends on charge relay system residues Asp-702 and His-734.

The protein belongs to the peptidase S9B family. DPPIV subfamily. As to quaternary structure, monomer. Homodimer. Heterodimer with Seprase (FAP). Requires homodimerization for optimal dipeptidyl peptidase activity and T-cell costimulation. Found in a membrane raft complex, at least composed of BCL10, CARD11, DPP4 and IKBKB. Associates with collagen. Interacts with PTPRC; the interaction is enhanced in an interleukin-12-dependent manner in activated lymphocytes. Interacts (via extracellular domain) with ADA; does not inhibit its dipeptidyl peptidase activity. Interacts with CAV1 (via the N-terminus); the interaction is direct. Interacts (via cytoplasmic tail) with CARD11 (via PDZ domain); its homodimerization is necessary for interaction with CARD11. Interacts with IGF2R; the interaction is direct. Interacts with GPC3. In terms of processing, the soluble form (Dipeptidyl peptidase 4 soluble form also named SDPP) derives from the membrane form (Dipeptidyl peptidase 4 membrane form also named MDPP) by proteolytic processing. Post-translationally, N- and O-Glycosylated. Phosphorylated. Mannose 6-phosphate residues in the carbohydrate moiety are necessary for interaction with IGF2R in activated T-cells. Mannose 6-phosphorylation is induced during T-cell activation.

The protein resides in the secreted. It localises to the cell membrane. It is found in the apical cell membrane. The protein localises to the cell projection. Its subcellular location is the invadopodium membrane. The protein resides in the lamellipodium membrane. It localises to the cell junction. It is found in the membrane raft. The enzyme catalyses Release of an N-terminal dipeptide, Xaa-Yaa-|-Zaa-, from a polypeptide, preferentially when Yaa is Pro, provided Zaa is neither Pro nor hydroxyproline.. With respect to regulation, inhibited by GPC3 and diprotin A. Cell surface glycoprotein receptor involved in the costimulatory signal essential for T-cell receptor (TCR)-mediated T-cell activation. Acts as a positive regulator of T-cell coactivation, by binding at least ADA, CAV1, IGF2R, and PTPRC. Its binding to CAV1 and CARD11 induces T-cell proliferation and NF-kappa-B activation in a T-cell receptor/CD3-dependent manner. Its interaction with ADA also regulates lymphocyte-epithelial cell adhesion. In association with FAP is involved in the pericellular proteolysis of the extracellular matrix (ECM), the migration and invasion of endothelial cells into the ECM. May be involved in the promotion of lymphatic endothelial cells adhesion, migration and tube formation. When overexpressed, enhanced cell proliferation, a process inhibited by GPC3. Also acts as a serine exopeptidase with a dipeptidyl peptidase activity that regulates various physiological processes by cleaving peptides in the circulation, including many chemokines, mitogenic growth factors, neuropeptides and peptide hormones. Removes N-terminal dipeptides sequentially from polypeptides having unsubstituted N-termini provided that the penultimate residue is proline. This Mus musculus (Mouse) protein is Dipeptidyl peptidase 4 (Dpp4).